Here is a 161-residue protein sequence, read N- to C-terminus: Troponin C, slow skeletal and cardiac muscles (161 aa).

Met-1 bears the N-acetylmethionine mark. EF-hand domains lie at 16 to 51, 52 to 87, 92 to 127, and 128 to 161; these read QKNE…LGQN, PTPE…CMKD, KTEE…TGET, and ITED…KGVE. Ca(2+) is bound by residues Asp-65, Asp-67, Ser-69, Thr-71, Glu-76, Asp-105, Asn-107, Asp-109, Tyr-111, Glu-116, Asp-141, Asn-143, Asp-145, Arg-147, and Glu-152.

It belongs to the troponin C family.

Its function is as follows. Troponin is the central regulatory protein of striated muscle contraction. Tn consists of three components: Tn-I which is the inhibitor of actomyosin ATPase, Tn-T which contains the binding site for tropomyosin and Tn-C. The binding of calcium to Tn-C abolishes the inhibitory action of Tn on actin filaments. This Gallus gallus (Chicken) protein is Troponin C, slow skeletal and cardiac muscles (TNNC1).